The following is a 257-amino-acid chain: Putative hydro-lyase Bamb_5282 (257 aa).

It belongs to the D-glutamate cyclase family.

The polypeptide is Putative hydro-lyase Bamb_5282 (Burkholderia ambifaria (strain ATCC BAA-244 / DSM 16087 / CCUG 44356 / LMG 19182 / AMMD) (Burkholderia cepacia (strain AMMD))).